An 87-amino-acid chain; its full sequence is uncharacterized protein (87 aa).

2 helical membrane passes run 10–30 (VAFT…FSIG) and 43–63 (GYYI…QKVT).

The protein localises to the cell membrane. This is an uncharacterized protein from Bacillus subtilis (strain 168).